A 296-amino-acid chain; its full sequence is MAMVQGKSLKYRVWATHIAMWAFLALIIFPLLMIIAISFREGNFATGSLIPDNPTLDHWKLALGFSITNADGTVTPPPFPVMTWLWNSVKVGGISAILIVALSTTSAYAFARMKFKGKNTILKAMMIFQMFPAVLALVALYALFDKLGQYIPFLGLNTHGGLIFAYLGGIALHVWTIKGYFESIDSSLEEAAALDGATPWQAFRLVLLPLSVPILAVVFILSFIMVIGEVPVASLLLSDVDSYTLAVGMQQYLYPQNYLWGDFAAAAVLSAVPITAVFLLAQRWLVGGLTAGGVKG.

Topologically, residues 1–12 are cytoplasmic; it reads MAMVQGKSLKYR. Residues 13–35 form a helical membrane-spanning segment; sequence VWATHIAMWAFLALIIFPLLMII. The Periplasmic portion of the chain corresponds to 36–88; that stretch reads AISFREGNFATGSLIPDNPTLDHWKLALGFSITNADGTVTPPPFPVMTWLWNS. In terms of domain architecture, ABC transmembrane type-1 spans 85 to 281; it reads LWNSVKVGGI…VPITAVFLLA (197 aa). A helical transmembrane segment spans residues 89–111; sequence VKVGGISAILIVALSTTSAYAFA. Topologically, residues 112–123 are cytoplasmic; sequence RMKFKGKNTILK. Residues 124–143 traverse the membrane as a helical segment; it reads AMMIFQMFPAVLALVALYAL. Residues 144–152 lie on the Periplasmic side of the membrane; sequence FDKLGQYIP. Residues 153-175 traverse the membrane as a helical segment; the sequence is FLGLNTHGGLIFAYLGGIALHVW. Residues 176–204 lie on the Cytoplasmic side of the membrane; the sequence is TIKGYFESIDSSLEEAAALDGATPWQAFR. A helical membrane pass occupies residues 205-227; it reads LVLLPLSVPILAVVFILSFIMVI. Residues 228 to 257 are Periplasmic-facing; sequence GEVPVASLLLSDVDSYTLAVGMQQYLYPQN. A helical membrane pass occupies residues 258-280; the sequence is YLWGDFAAAAVLSAVPITAVFLL. Over 281-296 the chain is Cytoplasmic; sequence AQRWLVGGLTAGGVKG.

It belongs to the binding-protein-dependent transport system permease family. MalFG subfamily. As to quaternary structure, the complex is composed of two ATP-binding proteins (MalK), two transmembrane proteins (MalG and MalF) and a solute-binding protein (MalE).

It is found in the cell inner membrane. In terms of biological role, part of the ABC transporter complex MalEFGK involved in maltose/maltodextrin import. Probably responsible for the translocation of the substrate across the membrane. The protein is Maltose/maltodextrin transport system permease protein MalG (malG) of Vibrio parahaemolyticus serotype O3:K6 (strain RIMD 2210633).